The primary structure comprises 272 residues: Probable glutathione S-transferase DHAR2, chloroplastic (272 aa).

Residues 1-57 (MAVLLRTTTSATTATSGGSSSATALLATTFRRGGRRLLLLPATRGSAPRRAALLTAR) constitute a chloroplast transit peptide. Positions 68 and 79 each coordinate glutathione. Positions 68 and 79 each coordinate L-ascorbate. In terms of domain architecture, GST N-terminal spans 70 to 148 (SLTVPDRLGD…AIEEKYPEPS (79 aa)). C80 acts as the Nucleophile in catalysis. 5 residues coordinate glutathione: K107, V120, S133, H219, and W266. The region spanning 126 to 272 (EEQWVADSDV…IAGWRPKVMG (147 aa)) is the GST C-terminal domain. K269 provides a ligand contact to L-ascorbate.

This sequence belongs to the GST superfamily. DHAR family. As to quaternary structure, monomer.

It localises to the plastid. The protein localises to the chloroplast. It carries out the reaction RX + glutathione = an S-substituted glutathione + a halide anion + H(+). It catalyses the reaction L-dehydroascorbate + 2 glutathione = glutathione disulfide + L-ascorbate. Involved in ascorbate homeostasis. Maintains redox pools of ascorbate by recycling dihydroascorbate (DHA) to ascorbate. Involved in scavenging reactive oxygen species (ROS) under oxidative stresses. The polypeptide is Probable glutathione S-transferase DHAR2, chloroplastic (Oryza sativa subsp. japonica (Rice)).